A 314-amino-acid polypeptide reads, in one-letter code: Cytochrome f (314 aa).

The first 30 residues, 1–30 (MATNKFFKSLLFALTIAINSFGFCIQDAVA), serve as a signal peptide directing secretion. Heme-binding residues include Tyr31, Cys51, Cys54, and His55. Residues 280–300 (IYGYLAFCFSVLITQIMLVLK) traverse the membrane as a helical segment.

Belongs to the cytochrome f family. In terms of assembly, the 4 large subunits of the cytochrome b6-f complex are cytochrome b6, subunit IV (17 kDa polypeptide, petD), cytochrome f and the Rieske protein, while the 4 small subunits are PetG, PetL, PetM and PetN. The complex functions as a dimer. Requires heme as cofactor.

The protein localises to the plastid. Its subcellular location is the chloroplast thylakoid membrane. In terms of biological role, component of the cytochrome b6-f complex, which mediates electron transfer between photosystem II (PSII) and photosystem I (PSI), cyclic electron flow around PSI, and state transitions. The chain is Cytochrome f from Phaeodactylum tricornutum (strain CCAP 1055/1).